Consider the following 97-residue polypeptide: Co-chaperonin GroES (97 aa).

This sequence belongs to the GroES chaperonin family. Heptamer of 7 subunits arranged in a ring. Interacts with the chaperonin GroEL.

It is found in the cytoplasm. In terms of biological role, together with the chaperonin GroEL, plays an essential role in assisting protein folding. The GroEL-GroES system forms a nano-cage that allows encapsulation of the non-native substrate proteins and provides a physical environment optimized to promote and accelerate protein folding. GroES binds to the apical surface of the GroEL ring, thereby capping the opening of the GroEL channel. The sequence is that of Co-chaperonin GroES from Azotobacter vinelandii (strain DJ / ATCC BAA-1303).